We begin with the raw amino-acid sequence, 149 residues long: Calmodulin (149 aa).

Position 2 is an N-acetylalanine (A2). EF-hand domains follow at residues 8–43 (EQIA…LGQN), 44–79 (PTEA…KMKD), 81–116 (DSEE…LGEK), and 117–149 (LTDE…MTAK). The Ca(2+) site is built by D21, D23, D25, T27, E32, D59, N61, T63, E68, D94, D96, N98, Y100, and E105. K116 carries the N6,N6,N6-trimethyllysine modification. Residues D130, D132, D134, Q136, and E141 each coordinate Ca(2+).

This sequence belongs to the calmodulin family.

Calmodulin acts as part of a calcium signal transduction pathway by mediating the control of a large number of enzymes, ion channels, aquaporins and other proteins through calcium-binding. Calcium-binding is required for the activation of calmodulin. Among the enzymes to be stimulated by the calmodulin-calcium complex are a number of protein kinases, such as myosin light-chain kinases and calmodulin-dependent protein kinase type II (CaMK2), and phosphatases. The sequence is that of Calmodulin from Myxine glutinosa (Atlantic hagfish).